We begin with the raw amino-acid sequence, 169 residues long: Eukaryotic translation initiation factor 5A-2 (169 aa).

At lysine 64 the chain carries Hypusine.

The protein belongs to the eIF-5A family. Lys-51 undergoes hypusination, a unique post-translational modification that consists in the addition of a butylamino group from spermidine to lysine side chain, leading to the formation of the unusual amino acid hypusine. eIF-5As are the only known proteins to undergo this modification, which is essential for their function.

Its subcellular location is the cytoplasm. It is found in the nucleus. Functionally, translation factor that promotes translation elongation and termination, particularly upon ribosome stalling at specific amino acid sequence contexts. Binds between the exit (E) and peptidyl (P) site of the ribosome and promotes rescue of stalled ribosome: specifically required for efficient translation of polyproline-containing peptides as well as other motifs that stall the ribosome. Acts as a ribosome quality control (RQC) cofactor by joining the RQC complex to facilitate peptidyl transfer during CAT tailing step. The polypeptide is Eukaryotic translation initiation factor 5A-2 (tif51b) (Schizosaccharomyces pombe (strain 972 / ATCC 24843) (Fission yeast)).